A 399-amino-acid polypeptide reads, in one-letter code: Elongation factor Tu (399 aa).

The 200-residue stretch at 10 to 209 folds into the tr-type G domain; the sequence is KPHVNIGTIG…AVDSYIPTPT (200 aa). Positions 19 to 26 are G1; sequence GHVDHGKT. 19–26 serves as a coordination point for GTP; that stretch reads GHVDHGKT. Thr-26 contacts Mg(2+). The G2 stretch occupies residues 60 to 64; the sequence is GITIA. Residues 81–84 form a G3 region; sequence DCPG. GTP is bound by residues 81-85 and 136-139; these read DCPGH and NKAD. The G4 stretch occupies residues 136-139; the sequence is NKAD. Residues 174 to 176 form a G5 region; it reads SAL.

It belongs to the TRAFAC class translation factor GTPase superfamily. Classic translation factor GTPase family. EF-Tu/EF-1A subfamily. As to quaternary structure, monomer.

The protein resides in the cytoplasm. The enzyme catalyses GTP + H2O = GDP + phosphate + H(+). In terms of biological role, GTP hydrolase that promotes the GTP-dependent binding of aminoacyl-tRNA to the A-site of ribosomes during protein biosynthesis. This Campylobacter jejuni (strain RM1221) protein is Elongation factor Tu.